The sequence spans 337 residues: Cytoskeleton protein RodZ (337 aa).

Residues 1–111 (MNTEATHDQN…LGKRRKKRDG (111 aa)) lie on the Cytoplasmic side of the membrane. Residues 19-71 (LRNAREQLGLSQQAVAERLCLKVSTVRDIEEDKAPADLASTFLRGYIRSYARL) enclose the HTH cro/C1-type domain. Residues 30 to 49 (QQAVAERLCLKVSTVRDIEE) constitute a DNA-binding region (H-T-H motif). Residues 112 to 132 (WLMTFTWLVLFVVIGLSGAWW) form a helical; Signal-anchor for type II membrane protein membrane-spanning segment. Residues 133–337 (WQDRKAQQEE…TLNAEQSPAQ (205 aa)) are Periplasmic-facing. Residues 144–167 (TTMADQSSAELSSNSEQGQSVPLN) show a composition bias toward polar residues. Positions 144–235 (TTMADQSSAE…PTAATTPDGA (92 aa)) are disordered. Positions 168–207 (TSTTTDPATTSTPPASVDTTATNTQTPAVTAPAPAVDPQQ) are enriched in low complexity. Residues 208-218 (NAVVSPSQANV) are compositionally biased toward polar residues. Positions 219–235 (DTAATPAPTAATTPDGA) are enriched in low complexity.

This sequence belongs to the RodZ family.

The protein resides in the cell inner membrane. Cytoskeletal protein that is involved in cell-shape control through regulation of the length of the long axis. The polypeptide is Cytoskeleton protein RodZ (Escherichia coli (strain K12 / MC4100 / BW2952)).